A 127-amino-acid chain; its full sequence is MIYGVGVDIVNIERVERILSKNKEGFVKRVLSEYEQVLFAKKGDSSTYCAKRFSAKEAFAKALGIGIGKIVSFQDLTICNNKQGNPYFIFSAKLCLYLVDKNIKKAHLSLSDEKFNAMAFVILEIEN.

2 residues coordinate Mg(2+): aspartate 8 and glutamate 57.

The protein belongs to the P-Pant transferase superfamily. AcpS family. Requires Mg(2+) as cofactor.

Its subcellular location is the cytoplasm. The catalysed reaction is apo-[ACP] + CoA = holo-[ACP] + adenosine 3',5'-bisphosphate + H(+). Functionally, transfers the 4'-phosphopantetheine moiety from coenzyme A to a Ser of acyl-carrier-protein. This is Holo-[acyl-carrier-protein] synthase from Vesicomyosocius okutanii subsp. Calyptogena okutanii (strain HA).